A 193-amino-acid chain; its full sequence is ATP synthase subunit b 2 (193 aa).

Residues Ile-44–Pro-64 form a helical membrane-spanning segment.

Belongs to the ATPase B chain family. As to quaternary structure, F-type ATPases have 2 components, F(1) - the catalytic core - and F(0) - the membrane proton channel. F(1) has five subunits: alpha(3), beta(3), gamma(1), delta(1), epsilon(1). F(0) has three main subunits: a(1), b(2) and c(10-14). The alpha and beta chains form an alternating ring which encloses part of the gamma chain. F(1) is attached to F(0) by a central stalk formed by the gamma and epsilon chains, while a peripheral stalk is formed by the delta and b chains.

It is found in the cell inner membrane. Functionally, f(1)F(0) ATP synthase produces ATP from ADP in the presence of a proton or sodium gradient. F-type ATPases consist of two structural domains, F(1) containing the extramembraneous catalytic core and F(0) containing the membrane proton channel, linked together by a central stalk and a peripheral stalk. During catalysis, ATP synthesis in the catalytic domain of F(1) is coupled via a rotary mechanism of the central stalk subunits to proton translocation. Its function is as follows. Component of the F(0) channel, it forms part of the peripheral stalk, linking F(1) to F(0). The b'-subunit is a diverged and duplicated form of b found in plants and photosynthetic bacteria. The protein is ATP synthase subunit b 2 (atpF2) of Jannaschia sp. (strain CCS1).